The chain runs to 159 residues: Nucleotide-binding protein PSPPH_4093 (159 aa).

The protein belongs to the YajQ family.

Functionally, nucleotide-binding protein. The protein is Nucleotide-binding protein PSPPH_4093 of Pseudomonas savastanoi pv. phaseolicola (strain 1448A / Race 6) (Pseudomonas syringae pv. phaseolicola (strain 1448A / Race 6)).